The following is a 652-amino-acid chain: ATP-binding cassette sub-family G member 5 (652 aa).

The segment at 1–25 (MGELPFLSPEGARGPHINRGSLSSL) is disordered. The Cytoplasmic portion of the chain corresponds to 1 to 384 (MGELPFLSPE…RVTRNLMRNK (384 aa)). The ABC transporter domain occupies 39–294 (LGVLHVSYSV…FNNCGYPCPE (256 aa)). The S-palmitoyl cysteine moiety is linked to residue Cys61. 87-94 (GSSGSGKT) serves as a coordination point for ATP. Residues 385-405 (QAVIMRLVQNLIMGLFLIFYL) form a helical membrane-spanning segment. The ABC transmembrane type-2 domain occupies 389 to 646 (MRLVQNLIMG…ILGIVIFKVR (258 aa)). Topologically, residues 406 to 422 (LRVQNNTLKGAVQDRVG) are extracellular. N-linked (GlcNAc...) asparagine glycosylation occurs at Asn410. The chain crosses the membrane as a helical span at residues 423–443 (LLYQLVGATPYTGMLNAVNLF). Topologically, residues 444–468 (PMLRAVSDQESQDGLYHKWQMLLAY) are cytoplasmic. A helical transmembrane segment spans residues 469–490 (VLHVLPFSVIATVIFSSVCYWT). Residues 491–501 (LGLYPEVARFG) lie on the Extracellular side of the membrane. Residues 502 to 522 (YFSAALLAPHLIGEFLTLVLL) traverse the membrane as a helical segment. Residues 523–529 (GIVQNPN) are Cytoplasmic-facing. A helical transmembrane segment spans residues 530–550 (IVNSIVALLSISGLLIGSGFI). Topologically, residues 551 to 624 (RNIQEMPIPL…PGATSRFTAN (74 aa)) are extracellular. 2 N-linked (GlcNAc...) asparagine glycosylation sites follow: Asn585 and Asn592. Residues 625 to 645 (FLILYGFIPALVILGIVIFKV) traverse the membrane as a helical segment. Topologically, residues 646–652 (RDYLISR) are cytoplasmic.

This sequence belongs to the ABC transporter superfamily. ABCG family. Eye pigment precursor importer (TC 3.A.1.204) subfamily. As to quaternary structure, heterodimer with ABCG8. Requires Mg(2+) as cofactor. Post-translationally, N-glycosylated. N-glycosylation is important for efficient export out of the endoplasmic reticulum. In terms of tissue distribution, detected in liver and jejunum. Detected on enterocyte villi (at protein level). Expressed in jejunum, ileum and, at lower level, in the liver.

It localises to the cell membrane. The protein resides in the apical cell membrane. The catalysed reaction is cholesterol(in) + ATP + H2O = cholesterol(out) + ADP + phosphate + H(+). It catalyses the reaction sitosterol(in) + ATP + H2O = sitosterol(out) + ADP + phosphate + H(+). Its activity is regulated as follows. Cholesterol transport is inhibited by vanadate and by beryllium fluoride. In terms of biological role, ABCG5 and ABCG8 form an obligate heterodimer that mediates Mg(2+)- and ATP-dependent sterol transport across the cell membrane. Plays an essential role in the selective transport of dietary plant sterols and cholesterol in and out of the enterocytes and in the selective sterol excretion by the liver into bile. Required for normal sterol homeostasis. The heterodimer with ABCG8 has ATPase activity. In Mus musculus (Mouse), this protein is ATP-binding cassette sub-family G member 5.